A 437-amino-acid polypeptide reads, in one-letter code: Branched-chain amino acid transport system 2 carrier protein (437 aa).

12 helical membrane-spanning segments follow: residues 9–29 (LLAL…IIFP), 43–63 (AAFG…VALA), 80–100 (AGVA…ATPR), 117–137 (GGVP…FLVL), 149–169 (VITP…IFAP), 192–212 (GYLT…ATAI), 228–248 (MIAG…LFYL), 280–300 (LLLA…LITA), 308–328 (LLPV…LLVA), 335–355 (LISL…VLIA), 369–389 (VFVP…LGAA), and 404–424 (LADQ…LAVV).

It belongs to the branched chain amino acid transporter family.

Its subcellular location is the cell inner membrane. In terms of biological role, component of the LIV-II transport system for branched-chain amino acids. BraB is specific for isoleucine, leucine and valine. The LIV-II transport system is coupled to sodium and lithium ions. The protein is Branched-chain amino acid transport system 2 carrier protein (braB) of Pseudomonas aeruginosa (strain ATCC 15692 / DSM 22644 / CIP 104116 / JCM 14847 / LMG 12228 / 1C / PRS 101 / PAO1).